A 90-amino-acid chain; its full sequence is Probable Fe(2+)-trafficking protein (90 aa).

This sequence belongs to the Fe(2+)-trafficking protein family.

Could be a mediator in iron transactions between iron acquisition and iron-requiring processes, such as synthesis and/or repair of Fe-S clusters in biosynthetic enzymes. In Pseudomonas fluorescens (strain SBW25), this protein is Probable Fe(2+)-trafficking protein.